The following is a 44-amino-acid chain: uncharacterized protein (44 aa).

Residues Leu22–Asn44 are disordered.

This is an uncharacterized protein from Dictyostelium discoideum (Social amoeba).